A 126-amino-acid polypeptide reads, in one-letter code: Fluoride-specific ion channel FluC (126 aa).

Transmembrane regions (helical) follow at residues 4–24 (PLLS…FLGL), 33–53 (IPLG…FAMA), 67–87 (FVIT…IEIV), and 97–117 (MAML…CLGL). Na(+) is bound by residues Gly-74 and Thr-77.

This sequence belongs to the fluoride channel Fluc/FEX (TC 1.A.43) family.

The protein resides in the cell inner membrane. The enzyme catalyses fluoride(in) = fluoride(out). With respect to regulation, na(+) is not transported, but it plays an essential structural role and its presence is essential for fluoride channel function. Functionally, fluoride-specific ion channel. Important for reducing fluoride concentration in the cell, thus reducing its toxicity. This is Fluoride-specific ion channel FluC from Acinetobacter baumannii (strain SDF).